The primary structure comprises 473 residues: UDP-N-acetylmuramate--L-alanine ligase (473 aa).

114–120 (GTHGKTT) is an ATP binding site.

Belongs to the MurCDEF family.

The protein localises to the cytoplasm. The catalysed reaction is UDP-N-acetyl-alpha-D-muramate + L-alanine + ATP = UDP-N-acetyl-alpha-D-muramoyl-L-alanine + ADP + phosphate + H(+). Its pathway is cell wall biogenesis; peptidoglycan biosynthesis. Its function is as follows. Cell wall formation. The protein is UDP-N-acetylmuramate--L-alanine ligase of Chlorobium luteolum (strain DSM 273 / BCRC 81028 / 2530) (Pelodictyon luteolum).